A 164-amino-acid chain; its full sequence is Lipoprotein signal peptidase (164 aa).

4 consecutive transmembrane segments (helical) span residues leucine 6–leucine 26, valine 39–alanine 59, glycine 65–alanine 85, and threonine 88–isoleucine 108. Residues aspartate 118 and aspartate 140 contribute to the active site. A helical membrane pass occupies residues valine 141–valine 161.

This sequence belongs to the peptidase A8 family.

It is found in the cell inner membrane. The enzyme catalyses Release of signal peptides from bacterial membrane prolipoproteins. Hydrolyzes -Xaa-Yaa-Zaa-|-(S,diacylglyceryl)Cys-, in which Xaa is hydrophobic (preferably Leu), and Yaa (Ala or Ser) and Zaa (Gly or Ala) have small, neutral side chains.. Its pathway is protein modification; lipoprotein biosynthesis (signal peptide cleavage). Functionally, this protein specifically catalyzes the removal of signal peptides from prolipoproteins. The protein is Lipoprotein signal peptidase of Rhodopseudomonas palustris (strain TIE-1).